The primary structure comprises 102 residues: Class I hydrophobin 1 (102 aa).

Residues 1-18 form the signal peptide; sequence MSLFKILVAAATVATALA. Disulfide bonds link cysteine 37–cysteine 84, cysteine 45–cysteine 78, cysteine 46–cysteine 63, and cysteine 85–cysteine 97.

This sequence belongs to the fungal hydrophobin family.

Its subcellular location is the secreted. It is found in the cell wall. Its function is as follows. Aerial growth, conidiation, and dispersal of filamentous fungi in the environment rely upon a capability of their secreting small amphipathic proteins called hydrophobins (HPBs) with low sequence identity. Class I can self-assemble into an outermost layer of rodlet bundles on aerial cell surfaces, conferring cellular hydrophobicity that supports fungal growth, development and dispersal; whereas Class II form highly ordered films at water-air interfaces through intermolecular interactions but contribute nothing to the rodlet structure. Hyd1 is essential for stress tolerance, conidial hydrophobicity, adhesion to insect cuticle, and insect infectivity/pathogenicity. Plays a neglectable role in hyphal growth and asexual development. This chain is Class I hydrophobin 1, found in Metarhizium robertsii (strain ARSEF 23 / ATCC MYA-3075) (Metarhizium anisopliae (strain ARSEF 23)).